Consider the following 134-residue polypeptide: DNA-directed RNA polymerase subunit omega (134 aa).

Belongs to the RNA polymerase subunit omega family. The RNAP catalytic core consists of 2 alpha, 1 beta, 1 beta' and 1 omega subunit. When a sigma factor is associated with the core the holoenzyme is formed, which can initiate transcription.

The catalysed reaction is RNA(n) + a ribonucleoside 5'-triphosphate = RNA(n+1) + diphosphate. Functionally, promotes RNA polymerase assembly. Latches the N- and C-terminal regions of the beta' subunit thereby facilitating its interaction with the beta and alpha subunits. The chain is DNA-directed RNA polymerase subunit omega from Rhizobium johnstonii (strain DSM 114642 / LMG 32736 / 3841) (Rhizobium leguminosarum bv. viciae).